The chain runs to 88 residues: Antitoxin VapB21 (88 aa).

In terms of biological role, antitoxin component of a type II toxin-antitoxin (TA) system. This Mycobacterium tuberculosis (strain CDC 1551 / Oshkosh) protein is Antitoxin VapB21 (vapB21).